The chain runs to 533 residues: Peptide chain release factor 3 (533 aa).

Positions 9–284 (ARRRTFAIIS…ALCELSPPPL (276 aa)) constitute a tr-type G domain. GTP is bound by residues 18 to 25 (SHPDAGKT), 95 to 99 (DTPGH), and 149 to 152 (NKLD).

It belongs to the TRAFAC class translation factor GTPase superfamily. Classic translation factor GTPase family. PrfC subfamily.

It is found in the cytoplasm. Increases the formation of ribosomal termination complexes and stimulates activities of RF-1 and RF-2. It binds guanine nucleotides and has strong preference for UGA stop codons. It may interact directly with the ribosome. The stimulation of RF-1 and RF-2 is significantly reduced by GTP and GDP, but not by GMP. In Cupriavidus necator (strain ATCC 17699 / DSM 428 / KCTC 22496 / NCIMB 10442 / H16 / Stanier 337) (Ralstonia eutropha), this protein is Peptide chain release factor 3.